Consider the following 310-residue polypeptide: Malate dehydrogenase (310 aa).

NAD(+) is bound by residues Gly7 to Gly12 and Asp32. Substrate-binding residues include Arg81 and Arg87. NAD(+) is bound by residues Asn94 and Val117 to Asn119. Positions 119 and 150 each coordinate substrate. The active-site Proton acceptor is His174.

The protein belongs to the LDH/MDH superfamily. MDH type 3 family.

It carries out the reaction (S)-malate + NAD(+) = oxaloacetate + NADH + H(+). Functionally, catalyzes the reversible oxidation of malate to oxaloacetate. The protein is Malate dehydrogenase of Pelodictyon phaeoclathratiforme (strain DSM 5477 / BU-1).